The primary structure comprises 142 residues: Sorting nexin-3 (142 aa).

The PX domain occupies 21 to 138 (NFLEIEVRNP…AAFVQDPNWD (118 aa)). A 1,2-diacyl-sn-glycero-3-phospho-(1D-myo-inositol-3-phosphate) is bound by residues arginine 64, serine 66, lysine 90, arginine 95, and arginine 104.

The protein belongs to the sorting nexin family.

Its subcellular location is the cytoplasm. The protein localises to the golgi apparatus membrane. It localises to the prevacuolar compartment membrane. In terms of biological role, required for retention of late Golgi membrane proteins. Component of the retrieval machinery that functions by direct interaction with the cytosolic tails of certain TGN membrane proteins during the sorting/budding process at the prevacuolar compartment. Binds phosphatidylinositol 3-phosphate (PtdIns(P3)). The sequence is that of Sorting nexin-3 (snx-3) from Neurospora crassa (strain ATCC 24698 / 74-OR23-1A / CBS 708.71 / DSM 1257 / FGSC 987).